The following is a 235-amino-acid chain: Flavonoid 3',5'-methyltransferase (235 aa).

S-adenosyl-L-methionine-binding positions include Val-51, Glu-73, 75 to 76 (GV), Ser-81, Asp-99, and Ala-128. Asp-151 provides a ligand contact to a divalent metal cation. An S-adenosyl-L-methionine-binding site is contributed by Asp-153. Residues Asp-177 and Asn-178 each contribute to the a divalent metal cation site.

It belongs to the class I-like SAM-binding methyltransferase superfamily. Cation-dependent O-methyltransferase family. CCoAMT subfamily. A divalent metal cation is required as a cofactor.

It localises to the cytoplasm. The catalysed reaction is S-adenosyl-L-methionine + a 3'-hydroxyflavonoid = S-adenosyl-L-homocysteine + a 3'-methoxyflavonoid.. The enzyme catalyses S-adenosyl-L-methionine + a 5'-hydroxy-3'-methoxyflavonoid = S-adenosyl-L-homocysteine + a 3',5'-dimethoxyflavonoid.. The protein operates within pigment biosynthesis; anthocyanin biosynthesis. Its function is as follows. Mediates O-methylation of anthocyanins. Anthocyanins are major pigments in grapes: at ripening initiation in red grapevine berries, the exocarp turns color from green to red and then to purple due to the accumulation and extent of methylation of anthocyanins. Catalyzes both 3' and 5' O-methylation of anthocyanins, with a preference for glycosylated substrates. Active on both anthocyanins and flavonols in vitro. Most active with delphinidin 3-glucoside but also acts on cyanidin 3-glucoside, cyanidin, myricetin, quercetin and quercetin 3-glucoside. Not able to methylate flavan type skeletons with chiral centers, such as catechins or dihydroquercetin. The protein is Flavonoid 3',5'-methyltransferase (FAOMT) of Vitis vinifera (Grape).